A 240-amino-acid chain; its full sequence is RING finger protein 151 (240 aa).

The RING-type zinc-finger motif lies at 20–58 (CSVCHGVLKRPVRLPCSHIFCKKCILRWLARQKTCPCCR). The TRAF-type zinc finger occupies 101 to 156 (GHQDSCPFELMVCPNEGCMLRVPRGALDEHRQNCQHGAYHRCSLGCGATLGPVERA).

The protein is RING finger protein 151 (RNF151) of Bos taurus (Bovine).